A 148-amino-acid polypeptide reads, in one-letter code: 3-dehydroquinate dehydratase (148 aa).

The active-site Proton acceptor is the Tyr23. Substrate-binding residues include Asn74, His80, and Asp87. Residue His100 is the Proton donor of the active site. Substrate-binding positions include 101–102 (IS) and Arg111.

Belongs to the type-II 3-dehydroquinase family. In terms of assembly, homododecamer.

It catalyses the reaction 3-dehydroquinate = 3-dehydroshikimate + H2O. It functions in the pathway metabolic intermediate biosynthesis; chorismate biosynthesis; chorismate from D-erythrose 4-phosphate and phosphoenolpyruvate: step 3/7. Catalyzes a trans-dehydration via an enolate intermediate. The sequence is that of 3-dehydroquinate dehydratase from Halothermothrix orenii (strain H 168 / OCM 544 / DSM 9562).